The chain runs to 86 residues: RNA-binding protein Hfq (86 aa).

One can recognise a Sm domain in the interval 9–69 (DRFLNILRTS…VSTIMPESFV (61 aa)).

Belongs to the Hfq family. In terms of assembly, homohexamer.

RNA chaperone that binds small regulatory RNA (sRNAs) and mRNAs to facilitate mRNA translational regulation in response to envelope stress, environmental stress and changes in metabolite concentrations. Also binds with high specificity to tRNAs. The polypeptide is RNA-binding protein Hfq (Thermosipho melanesiensis (strain DSM 12029 / CIP 104789 / BI429)).